We begin with the raw amino-acid sequence, 149 residues long: Nucleoside diphosphate kinase (149 aa).

The ATP site is built by Lys9, Phe57, Arg85, Thr91, Arg102, and Asn112. Catalysis depends on His115, which acts as the Pros-phosphohistidine intermediate.

This sequence belongs to the NDK family. In terms of assembly, homotetramer. Mg(2+) serves as cofactor.

Its subcellular location is the cytoplasm. The catalysed reaction is a 2'-deoxyribonucleoside 5'-diphosphate + ATP = a 2'-deoxyribonucleoside 5'-triphosphate + ADP. It catalyses the reaction a ribonucleoside 5'-diphosphate + ATP = a ribonucleoside 5'-triphosphate + ADP. In terms of biological role, major role in the synthesis of nucleoside triphosphates other than ATP. The ATP gamma phosphate is transferred to the NDP beta phosphate via a ping-pong mechanism, using a phosphorylated active-site intermediate. This Staphylococcus haemolyticus (strain JCSC1435) protein is Nucleoside diphosphate kinase.